Here is a 225-residue protein sequence, read N- to C-terminus: Ribosomal RNA large subunit methyltransferase E (225 aa).

Glycine 64, tryptophan 66, aspartate 93, aspartate 109, and aspartate 138 together coordinate S-adenosyl-L-methionine. Lysine 178 functions as the Proton acceptor in the catalytic mechanism.

It belongs to the class I-like SAM-binding methyltransferase superfamily. RNA methyltransferase RlmE family.

It localises to the cytoplasm. The catalysed reaction is uridine(2552) in 23S rRNA + S-adenosyl-L-methionine = 2'-O-methyluridine(2552) in 23S rRNA + S-adenosyl-L-homocysteine + H(+). Specifically methylates the uridine in position 2552 of 23S rRNA at the 2'-O position of the ribose in the fully assembled 50S ribosomal subunit. This is Ribosomal RNA large subunit methyltransferase E from Cupriavidus pinatubonensis (strain JMP 134 / LMG 1197) (Cupriavidus necator (strain JMP 134)).